The following is a 588-amino-acid chain: Proteasome-associated ATPase (588 aa).

Positions 1–10 are enriched in basic and acidic residues; the sequence is MAAHDDDMNR. A disordered region spans residues 1-23; that stretch reads MAAHDDDMNRGIRPGRGSDDPAG. Residues 47-94 are a coiled coil; the sequence is RILEERIVELQTNLAGVSAQNERLANTLREARDQIVALKEEVDRLAQP. Position 276-281 (276-281) interacts with ATP; it reads GCGKTL. Positions 587 to 588 are docks into pockets in the proteasome alpha-ring; it reads YL.

Belongs to the AAA ATPase family. As to quaternary structure, homohexamer. Assembles into a hexameric ring structure that caps the 20S proteasome core. Strongly interacts with the prokaryotic ubiquitin-like protein Pup through a hydrophobic interface; the interacting region of ARC lies in its N-terminal coiled-coil domain. There is one Pup binding site per ARC hexamer ring. Upon ATP-binding, the C-terminus of ARC interacts with the alpha-rings of the proteasome core, possibly by binding to the intersubunit pockets.

It participates in protein degradation; proteasomal Pup-dependent pathway. Its function is as follows. ATPase which is responsible for recognizing, binding, unfolding and translocation of pupylated proteins into the bacterial 20S proteasome core particle. May be essential for opening the gate of the 20S proteasome via an interaction with its C-terminus, thereby allowing substrate entry and access to the site of proteolysis. Thus, the C-termini of the proteasomal ATPase may function like a 'key in a lock' to induce gate opening and therefore regulate proteolysis. In Streptomyces avermitilis (strain ATCC 31267 / DSM 46492 / JCM 5070 / NBRC 14893 / NCIMB 12804 / NRRL 8165 / MA-4680), this protein is Proteasome-associated ATPase.